We begin with the raw amino-acid sequence, 206 residues long: Large ribosomal subunit protein uL4 (206 aa).

Residues 44–80 (KRAGTHSVKTRSTISGGGAKPWRQKGTGRARSGSNRS) form a disordered region.

This sequence belongs to the universal ribosomal protein uL4 family. Part of the 50S ribosomal subunit.

In terms of biological role, one of the primary rRNA binding proteins, this protein initially binds near the 5'-end of the 23S rRNA. It is important during the early stages of 50S assembly. It makes multiple contacts with different domains of the 23S rRNA in the assembled 50S subunit and ribosome. Its function is as follows. Forms part of the polypeptide exit tunnel. In Oleidesulfovibrio alaskensis (strain ATCC BAA-1058 / DSM 17464 / G20) (Desulfovibrio alaskensis), this protein is Large ribosomal subunit protein uL4.